We begin with the raw amino-acid sequence, 197 residues long: Beta-crystallin A2 (197 aa).

The tract at residues 1–11 (MSGTLSQGSSP) is N-terminal arm. Beta/gamma crystallin 'Greek key' domains lie at 12-52 (ARLT…KVES) and 53-99 (GAWV…RPLL). The connecting peptide stretch occupies residues 100 to 105 (CANHSD). Beta/gamma crystallin 'Greek key' domains follow at residues 106-147 (SRVT…KVTS) and 148-196 (GAWV…RRVQ).

It belongs to the beta/gamma-crystallin family. Homo/heterodimer, or complexes of higher-order. The structure of beta-crystallin oligomers seems to be stabilized through interactions between the N-terminal arms.

Functionally, crystallins are the dominant structural components of the vertebrate eye lens. The protein is Beta-crystallin A2 (CRYBA2) of Macropus fuliginosus (Western gray kangaroo).